A 300-amino-acid polypeptide reads, in one-letter code: Dioxygenase FUM3 (300 aa).

Fe cation contacts are provided by H146, D148, and H222.

The protein belongs to the PhyH family. As to quaternary structure, homodimer. Requires Fe cation as cofactor.

Its pathway is mycotoxin biosynthesis. Dioxygenase; part of the gene cluster that mediates the biosynthesis of fumonisins B1 (FB1), B2 (FB2), B3 (FB3), and B4 (FB4), which are carcinogenic mycotoxins. Within the pathway, FUM3 performs the C-5 hydroxylation present in FB1 and FB2 and which occurs late in the biosynthesis. The biosynthesis starts with the FUM1-catalyzed carbon chain assembly from one molecule of acetyl-CoA, eight molecules of malonyl-CoA, and two molecules of methionine (in S-adenosyl form). The C18 polyketide chain is released from the enzyme by a nucleophilic attack of a carbanion, which is derived from R-carbon of alanine by decarboxylation, on the carbonyl carbon of polyketide acyl chain. This step is catalyzed by the pyridoxal 5'-phosphate-dependent aminoacyl transferase FUM8. The resultant 3-keto intermediate is then stereospecifically reduced to a 3-hydroxyl product by reductase FUM13. Subsequent oxidations at C-10 by the cytochrome P450 monooxygenase FUM2, C-14 and C-15 by FUM6, FUM12 or FUM15, tricarballylic esterification of the hydroxyl groups on C-14 and C-15 by acyltransferase FUM14, and C-5 hydroxylation by 2-keto-glutarate-dependent dioxygenase FUM3 furnish the biosynthesis of fumonisins. The tricarballylic moieties are most likely derived from the citric acid cycle, and their addition to the carbon backbone may involve FUM7, FUM10, FUM11 and FUM14. The chain is Dioxygenase FUM3 from Gibberella moniliformis (strain M3125 / FGSC 7600) (Maize ear and stalk rot fungus).